The following is a 399-amino-acid chain: Methylthioribose kinase (399 aa).

ATP-binding positions include asparagine 40, lysine 57, and 111 to 113 (EDL). Aspartate 229 lines the substrate pocket. Residue 246 to 248 (DAE) participates in ATP binding. Arginine 344 serves as a coordination point for substrate.

Belongs to the methylthioribose kinase family. Homodimer.

It carries out the reaction 5-(methylsulfanyl)-D-ribose + ATP = 5-(methylsulfanyl)-alpha-D-ribose 1-phosphate + ADP + H(+). It functions in the pathway amino-acid biosynthesis; L-methionine biosynthesis via salvage pathway; S-methyl-5-thio-alpha-D-ribose 1-phosphate from S-methyl-5'-thioadenosine (hydrolase route): step 2/2. Functionally, catalyzes the phosphorylation of methylthioribose into methylthioribose-1-phosphate. This is Methylthioribose kinase from Klebsiella pneumoniae subsp. pneumoniae (strain ATCC 700721 / MGH 78578).